The chain runs to 177 residues: UPF0316 protein STH2077 (177 aa).

2 helical membrane passes run 9–29 (AALD…VNTV) and 41–61 (LASA…GLVV).

It belongs to the UPF0316 family.

The protein resides in the cell membrane. The polypeptide is UPF0316 protein STH2077 (Symbiobacterium thermophilum (strain DSM 24528 / JCM 14929 / IAM 14863 / T)).